The chain runs to 360 residues: Photosystem II protein D1 (360 aa).

3 consecutive transmembrane segments (helical) span residues 29 to 46, 118 to 133, and 142 to 156; these read YIGW…TATC, HFLI…EWEL, and WICV…AATA. H118 provides a ligand contact to chlorophyll a. Pheophytin a is bound at residue Y126. The [CaMn4O5] cluster site is built by D170 and E189. Residues 197 to 218 form a helical membrane-spanning segment; sequence FHMAGVAGVFGGALFSAMHGSL. H198 provides a ligand contact to chlorophyll a. Residues H215 and 264–265 contribute to the a quinone site; that span reads SF. H215 serves as a coordination point for Fe cation. A Fe cation-binding site is contributed by H272. Residues 274–288 traverse the membrane as a helical segment; the sequence is FLGAWPVVGIWLTAI. [CaMn4O5] cluster-binding residues include H332, E333, D342, and A344. The propeptide occupies 345–360; it reads SNSVVPVALTAPSVEA.

The protein belongs to the reaction center PufL/M/PsbA/D family. In terms of assembly, PSII is composed of 1 copy each of membrane proteins PsbA, PsbB, PsbC, PsbD, PsbE, PsbF, PsbH, PsbI, PsbJ, PsbK, PsbL, PsbM, PsbT, PsbX, PsbY, PsbZ, Psb30/Ycf12, at least 3 peripheral proteins of the oxygen-evolving complex and a large number of cofactors. It forms dimeric complexes. It depends on The D1/D2 heterodimer binds P680, chlorophylls that are the primary electron donor of PSII, and subsequent electron acceptors. It shares a non-heme iron and each subunit binds pheophytin, quinone, additional chlorophylls, carotenoids and lipids. D1 provides most of the ligands for the Mn4-Ca-O5 cluster of the oxygen-evolving complex (OEC). There is also a Cl(-1) ion associated with D1 and D2, which is required for oxygen evolution. The PSII complex binds additional chlorophylls, carotenoids and specific lipids. as a cofactor. Tyr-161 forms a radical intermediate that is referred to as redox-active TyrZ, YZ or Y-Z. In terms of processing, C-terminally processed by CTPA; processing is essential to allow assembly of the oxygen-evolving complex and thus photosynthetic growth.

The protein localises to the plastid. Its subcellular location is the chloroplast thylakoid membrane. It carries out the reaction 2 a plastoquinone + 4 hnu + 2 H2O = 2 a plastoquinol + O2. In terms of biological role, photosystem II (PSII) is a light-driven water:plastoquinone oxidoreductase that uses light energy to abstract electrons from H(2)O, generating O(2) and a proton gradient subsequently used for ATP formation. It consists of a core antenna complex that captures photons, and an electron transfer chain that converts photonic excitation into a charge separation. The D1/D2 (PsbA/PsbD) reaction center heterodimer binds P680, the primary electron donor of PSII as well as several subsequent electron acceptors. The polypeptide is Photosystem II protein D1 (Cyanidioschyzon merolae (strain NIES-3377 / 10D) (Unicellular red alga)).